Reading from the N-terminus, the 319-residue chain is Beta-ketoacyl-[acyl-carrier-protein] synthase III (319 aa).

Residues Cys112 and His246 contribute to the active site. The ACP-binding stretch occupies residues 247 to 251 (QANFR). Asn276 is an active-site residue.

It belongs to the thiolase-like superfamily. FabH family. In terms of assembly, homodimer.

The protein resides in the cytoplasm. It carries out the reaction malonyl-[ACP] + acetyl-CoA + H(+) = 3-oxobutanoyl-[ACP] + CO2 + CoA. It participates in lipid metabolism; fatty acid biosynthesis. In terms of biological role, catalyzes the condensation reaction of fatty acid synthesis by the addition to an acyl acceptor of two carbons from malonyl-ACP. Catalyzes the first condensation reaction which initiates fatty acid synthesis and may therefore play a role in governing the total rate of fatty acid production. Possesses both acetoacetyl-ACP synthase and acetyl transacylase activities. Its substrate specificity determines the biosynthesis of branched-chain and/or straight-chain of fatty acids. The chain is Beta-ketoacyl-[acyl-carrier-protein] synthase III from Pseudoalteromonas atlantica (strain T6c / ATCC BAA-1087).